The sequence spans 82 residues: Small ribosomal subunit protein bS18 (82 aa).

The segment at Met1–Cys20 is disordered.

Belongs to the bacterial ribosomal protein bS18 family. In terms of assembly, part of the 30S ribosomal subunit. Forms a tight heterodimer with protein bS6.

Functionally, binds as a heterodimer with protein bS6 to the central domain of the 16S rRNA, where it helps stabilize the platform of the 30S subunit. In Mesorhizobium japonicum (strain LMG 29417 / CECT 9101 / MAFF 303099) (Mesorhizobium loti (strain MAFF 303099)), this protein is Small ribosomal subunit protein bS18.